Consider the following 267-residue polypeptide: Type III pantothenate kinase (267 aa).

6-13 (DSGNSRLK) contributes to the ATP binding site. Substrate-binding positions include Tyr96 and 103 to 106 (GADR). Catalysis depends on Asp105, which acts as the Proton acceptor. Residue Thr131 coordinates ATP. Position 181 (Thr181) interacts with substrate.

This sequence belongs to the type III pantothenate kinase family. As to quaternary structure, homodimer. Requires NH4(+) as cofactor. K(+) is required as a cofactor.

The protein resides in the cytoplasm. It carries out the reaction (R)-pantothenate + ATP = (R)-4'-phosphopantothenate + ADP + H(+). It participates in cofactor biosynthesis; coenzyme A biosynthesis; CoA from (R)-pantothenate: step 1/5. In terms of biological role, catalyzes the phosphorylation of pantothenate (Pan), the first step in CoA biosynthesis. The chain is Type III pantothenate kinase from Bordetella bronchiseptica (strain ATCC BAA-588 / NCTC 13252 / RB50) (Alcaligenes bronchisepticus).